Reading from the N-terminus, the 42-residue chain is Cytochrome b6-f complex subunit 7 (42 aa).

The chain crosses the membrane as a helical span at residues 19-37 (AVVCFSMTLFGLSLGFGLL).

It belongs to the PetM family. As to quaternary structure, the 4 large subunits of the cytochrome b6-f complex are cytochrome b6, subunit IV (17 kDa polypeptide, PetD), cytochrome f and the Rieske protein, while the 4 small subunits are PetG, PetL, PetM and PetN. The complex functions as a dimer.

The protein resides in the plastid. It localises to the chloroplast thylakoid membrane. Functionally, component of the cytochrome b6-f complex, which mediates electron transfer between photosystem II (PSII) and photosystem I (PSI), cyclic electron flow around PSI, and state transitions. The protein is Cytochrome b6-f complex subunit 7 of Phaeodactylum tricornutum (strain CCAP 1055/1).